The primary structure comprises 142 residues: Large ribosomal subunit protein uL13 (142 aa).

The protein belongs to the universal ribosomal protein uL13 family. In terms of assembly, part of the 50S ribosomal subunit.

In terms of biological role, this protein is one of the early assembly proteins of the 50S ribosomal subunit, although it is not seen to bind rRNA by itself. It is important during the early stages of 50S assembly. This chain is Large ribosomal subunit protein uL13, found in Desulfotalea psychrophila (strain LSv54 / DSM 12343).